We begin with the raw amino-acid sequence, 347 residues long: NADH-ubiquinone oxidoreductase chain 2 (347 aa).

11 helical membrane passes run 3–23 (PPILITIMLTVVSGTMIVLTS), 25–45 (HWLTVWIGFEMNMLAIIPILM), 59–79 (YLLTQATASMILMMGVAIDLL), 96–116 (AMMTIALAMKLGLAPFHFWVP), 122–142 (IHMSSGLILLTWQKIAPLSIL), 149–169 (INPNLLLPMAIASVLIGGWGG), 178–198 (ILAYSSIAHMGWMAAITLYNP), 200–220 (MMILNLTIYIIMTSTTFMLFM), 237–257 (APLITSLILMLMLSLGGLPPL), 274–294 (EMIIVPTLLAMTALLNLYFYM), and 325–345 (LLSPLIVVSTMLLPITPLLSI).

It belongs to the complex I subunit 2 family. Core subunit of respiratory chain NADH dehydrogenase (Complex I) which is composed of 45 different subunits. Interacts with TMEM242.

The protein resides in the mitochondrion inner membrane. The catalysed reaction is a ubiquinone + NADH + 5 H(+)(in) = a ubiquinol + NAD(+) + 4 H(+)(out). In terms of biological role, core subunit of the mitochondrial membrane respiratory chain NADH dehydrogenase (Complex I) which catalyzes electron transfer from NADH through the respiratory chain, using ubiquinone as an electron acceptor. Essential for the catalytic activity and assembly of complex I. The sequence is that of NADH-ubiquinone oxidoreductase chain 2 from Cynictis penicillata (Yellow mongoose).